A 481-amino-acid polypeptide reads, in one-letter code: Leukocyte immunoglobulin-like receptor subfamily A member 6 (481 aa).

Positions 1 to 23 (MTPALTALLCLGLSLGPRTHVQA) are cleaved as a signal peptide. An Ig-like C2-type 1 domain is found at 24–118 (GPLPKPTLWA…PSDPLELVVT (95 aa)). Over 24 to 447 (GPLPKPTLWA…SHAKDYTVEN (424 aa)) the chain is Extracellular. A disulfide bridge connects residues Cys-49 and Cys-98. Asn-139 is a glycosylation site (N-linked (GlcNAc...) asparagine). Disulfide bonds link Cys-144-Cys-196 and Cys-245-Cys-296. Ig-like C2-type domains lie at 225-314 (PSLL…DPLN) and 323-408 (DRVS…HLLS). 2 N-linked (GlcNAc...) asparagine glycosylation sites follow: Asn-301 and Asn-340. Cys-345 and Cys-396 are joined by a disulfide. A disordered region spans residues 418 to 439 (VSGPSGGPSLPPTGPPSTPASH). Over residues 426–435 (SLPPTGPPST) the composition is skewed to pro residues. The chain crosses the membrane as a helical span at residues 448 to 468 (LIRMGMAGLVLVVLGILLFEA). Residues 469-481 (QHSQRSPQDAARR) lie on the Cytoplasmic side of the membrane.

The protein localises to the membrane. Functionally, may act as receptor for class I MHC antigens. The sequence is that of Leukocyte immunoglobulin-like receptor subfamily A member 6 (LILRA6) from Pan troglodytes (Chimpanzee).